The sequence spans 568 residues: Periplasmic trehalase (568 aa).

A signal peptide spans 1–38 (MPHAPARSGDAMSAAAPPCCTSLLGLSLSMFVAPCALA). Residues Arg-169, 176–177 (WD), Asn-213, 222–224 (RSQ), 294–296 (RPE), and Gly-327 contribute to the substrate site. Catalysis depends on proton donor/acceptor residues Asp-329 and Glu-511. A substrate-binding site is contributed by Glu-526.

Belongs to the glycosyl hydrolase 37 family.

The protein resides in the periplasm. The enzyme catalyses alpha,alpha-trehalose + H2O = alpha-D-glucose + beta-D-glucose. Provides the cells with the ability to utilize trehalose at high osmolarity by splitting it into glucose molecules that can subsequently be taken up by the phosphotransferase-mediated uptake system. The sequence is that of Periplasmic trehalase from Xanthomonas campestris pv. campestris (strain 8004).